A 146-amino-acid chain; its full sequence is Ribosome maturation factor RimP (146 aa).

Belongs to the RimP family.

It is found in the cytoplasm. Functionally, required for maturation of 30S ribosomal subunits. The protein is Ribosome maturation factor RimP of Helicobacter pylori (strain ATCC 700392 / 26695) (Campylobacter pylori).